A 442-amino-acid polypeptide reads, in one-letter code: Serine--tRNA ligase (442 aa).

Thr244–Glu246 is an L-serine binding site. Arg275 to Glu277 contacts ATP. Glu298 contacts L-serine. Glu365–Ser368 is a binding site for ATP. Ser400 is a binding site for L-serine.

This sequence belongs to the class-II aminoacyl-tRNA synthetase family. Type-1 seryl-tRNA synthetase subfamily. In terms of assembly, homodimer. The tRNA molecule binds across the dimer.

The protein resides in the cytoplasm. The catalysed reaction is tRNA(Ser) + L-serine + ATP = L-seryl-tRNA(Ser) + AMP + diphosphate + H(+). The enzyme catalyses tRNA(Sec) + L-serine + ATP = L-seryl-tRNA(Sec) + AMP + diphosphate + H(+). Its pathway is aminoacyl-tRNA biosynthesis; selenocysteinyl-tRNA(Sec) biosynthesis; L-seryl-tRNA(Sec) from L-serine and tRNA(Sec): step 1/1. Its function is as follows. Catalyzes the attachment of serine to tRNA(Ser). Is also able to aminoacylate tRNA(Sec) with serine, to form the misacylated tRNA L-seryl-tRNA(Sec), which will be further converted into selenocysteinyl-tRNA(Sec). The sequence is that of Serine--tRNA ligase from Bradyrhizobium sp. (strain ORS 278).